Here is a 321-residue protein sequence, read N- to C-terminus: Cytochrome c biogenesis protein CcsA (321 aa).

The next 8 helical transmembrane spans lie at 17–37 (IVSI…IVGL), 44–64 (GMIS…IYSG), 71–91 (LYES…IPYF), 98–118 (LSLV…SGLL), 143–163 (MVLS…LLVI), 225–245 (VISL…VWAN), 258–275 (ETWA…LHTR), and 286–306 (AIVA…VNLL).

It belongs to the CcmF/CycK/Ccl1/NrfE/CcsA family. May interact with Ccs1.

The protein resides in the plastid. The protein localises to the chloroplast thylakoid membrane. Functionally, required during biogenesis of c-type cytochromes (cytochrome c6 and cytochrome f) at the step of heme attachment. The protein is Cytochrome c biogenesis protein CcsA of Buxus microphylla (Littleleaf boxwood).